The chain runs to 78 residues: WAP four-disulfide core domain protein 12 (78 aa).

The first 21 residues, 1-21, serve as a signal peptide directing secretion; it reads MWPNSILVLTVLLISSTLVTG. The 48-residue stretch at 25–72 folds into the WAP domain; that stretch reads KGAEKGVCPPDNVRCIRGEDPQCHNDNDCKDQKICCYWHCGFKCVQPV. Disulfide bonds link Cys-32/Cys-60, Cys-39/Cys-64, Cys-47/Cys-59, and Cys-53/Cys-68.

Its subcellular location is the secreted. In terms of biological role, antibacterial protein. Putative acid-stable proteinase inhibitor. This chain is WAP four-disulfide core domain protein 12, found in Rattus norvegicus (Rat).